Reading from the N-terminus, the 216-residue chain is Fibroblast growth factor 17 (216 aa).

The signal sequence occupies residues Met-1 to Gln-22. N-linked (GlcNAc...) asparagine glycosylation occurs at Asn-137. The tract at residues Phe-195–Thr-216 is disordered. A compositionally biased stretch (basic residues) spans Arg-204–Thr-216.

This sequence belongs to the heparin-binding growth factors family. In terms of assembly, interacts with FGFR3 and FGFR4.

It localises to the secreted. Its function is as follows. Plays an important role in the regulation of embryonic development and as signaling molecule in the induction and patterning of the embryonic brain. Required for normal brain development. This chain is Fibroblast growth factor 17 (Fgf17), found in Mus musculus (Mouse).